Consider the following 342-residue polypeptide: Oxygen-dependent coproporphyrinogen-III oxidase (342 aa).

Residue S107 participates in substrate binding. H111 and H121 together coordinate a divalent metal cation. H121 (proton donor) is an active-site residue. 123–125 is a substrate binding site; the sequence is NYR. The a divalent metal cation site is built by H155 and H185. Positions 277–312 are important for dimerization; sequence YVEFNLVYDRGTIFGLQTNGRTESILMSLPPLVRWE.

It belongs to the aerobic coproporphyrinogen-III oxidase family. As to quaternary structure, homodimer. It depends on a divalent metal cation as a cofactor.

It is found in the cytoplasm. It carries out the reaction coproporphyrinogen III + O2 + 2 H(+) = protoporphyrinogen IX + 2 CO2 + 2 H2O. Its pathway is porphyrin-containing compound metabolism; protoporphyrin-IX biosynthesis; protoporphyrinogen-IX from coproporphyrinogen-III (O2 route): step 1/1. Its function is as follows. Involved in the heme and chlorophyll biosynthesis. Catalyzes the aerobic oxidative decarboxylation of propionate groups of rings A and B of coproporphyrinogen-III to yield the vinyl groups in protoporphyrinogen-IX. In Synechococcus sp. (strain ATCC 27144 / PCC 6301 / SAUG 1402/1) (Anacystis nidulans), this protein is Oxygen-dependent coproporphyrinogen-III oxidase.